Consider the following 192-residue polypeptide: Thioredoxin-like 3-2, chloroplastic (192 aa).

The N-terminal 55 residues, 1–55, are a transit peptide targeting the chloroplast; it reads MSEIVNLSSSLRSLNPKISPLVPPYRQTSSSFSRPRNFKYHSFTDKICLAAERIR. Positions 66 to 191 constitute a Thioredoxin domain; it reads LQELDDSPVS…VREMIENDSI (126 aa). Active-site nucleophile residues include cysteine 110 and cysteine 113. Cysteines 110 and 113 form a disulfide.

The protein belongs to the thioredoxin family.

The protein resides in the plastid. The protein localises to the chloroplast stroma. Functionally, probable thiol-disulfide oxidoreductase that may participate in various redox reactions. The protein is Thioredoxin-like 3-2, chloroplastic (WCRKC2) of Arabidopsis thaliana (Mouse-ear cress).